The sequence spans 168 residues: Probable chorismate pyruvate-lyase (168 aa).

Residues Arg-75, Ile-114, and Glu-155 each coordinate substrate.

This sequence belongs to the UbiC family.

The protein localises to the cytoplasm. The enzyme catalyses chorismate = 4-hydroxybenzoate + pyruvate. It functions in the pathway cofactor biosynthesis; ubiquinone biosynthesis. In terms of biological role, removes the pyruvyl group from chorismate, with concomitant aromatization of the ring, to provide 4-hydroxybenzoate (4HB) for the ubiquinone pathway. This Psychrobacter arcticus (strain DSM 17307 / VKM B-2377 / 273-4) protein is Probable chorismate pyruvate-lyase.